We begin with the raw amino-acid sequence, 340 residues long: Ephrin-B3 (340 aa).

The first 27 residues, 1–27 (MGPPHSGPGGVRVGALLLLGVLGLVSG), serve as a signal peptide directing secretion. Residues 28–167 (LSLEPVYWNS…TRGMKVLLRV (140 aa)) enclose the Ephrin RBD domain. Topologically, residues 28–226 (LSLEPVYWNS…EGPLPPPSMP (199 aa)) are extracellular. 2 disulfides stabilise this stretch: cysteine 62-cysteine 104 and cysteine 92-cysteine 156. The tract at residues 168–225 (GQSPRGGAVPRKPVSEMPMERDRGAAHSLEPGKENLPGDPTSNATSRGAEGPLPPPSM) is disordered. Residues 185–200 (PMERDRGAAHSLEPGK) are compositionally biased toward basic and acidic residues. N-linked (GlcNAc...) asparagine glycosylation occurs at asparagine 210. The helical transmembrane segment at 227–247 (AVAGAAGGLALLLLGVAGAGG) threads the bilayer. The Cytoplasmic segment spans residues 248–340 (AMCWRRRRAK…QSPPNIYYKV (93 aa)). Residues 254–298 (RRAKPSESRHPGPGSFGRGGSLGLGGGGGMGPREAEPGELGIALR) are disordered. Over residues 267-284 (GSFGRGGSLGLGGGGGMG) the composition is skewed to gly residues. Arginine 271 is modified (omega-N-methylarginine). Serine 274 bears the Phosphoserine mark. The PDZ-binding signature appears at 338-340 (YKV).

The protein belongs to the ephrin family. In terms of assembly, interacts with GRIP1 and GRIP2. (Microbial infection) Interacts with nipah virus and hendra virus glycoprotein. As to expression, highly expressed in brain; expressed in embryonic floor plate, roof plate and hindbrain segments.

The protein resides in the membrane. Functionally, cell surface transmembrane ligand for Eph receptors, a family of receptor tyrosine kinases which are crucial for migration, repulsion and adhesion during neuronal, vascular and epithelial development. Binds promiscuously Eph receptors residing on adjacent cells, leading to contact-dependent bidirectional signaling into neighboring cells. The signaling pathway downstream of the receptor is referred to as forward signaling while the signaling pathway downstream of the ephrin ligand is referred to as reverse signaling. May play a pivotal role in forebrain function. Binds to, and induce the collapse of, commissural axons/growth cones in vitro. May play a role in constraining the orientation of longitudinally projecting axons. Its function is as follows. (Microbial infection) Acts as a receptor for nipah virus and hendra virus. The polypeptide is Ephrin-B3 (EFNB3) (Homo sapiens (Human)).